Here is a 129-residue protein sequence, read N- to C-terminus: Transmembrane protein 105 (129 aa).

Helical transmembrane passes span 23–43 (AGNV…TAWL) and 94–114 (FLAG…CGVV).

The protein localises to the membrane. This is Transmembrane protein 105 (TMEM105) from Homo sapiens (Human).